Here is a 250-residue protein sequence, read N- to C-terminus: Small ribosomal subunit protein uS2 (250 aa).

This sequence belongs to the universal ribosomal protein uS2 family.

The sequence is that of Small ribosomal subunit protein uS2 from Paracidovorax citrulli (strain AAC00-1) (Acidovorax citrulli).